The sequence spans 106 residues: Small ribosomal subunit protein uS10 (106 aa).

It belongs to the universal ribosomal protein uS10 family. In terms of assembly, part of the 30S ribosomal subunit.

Functionally, involved in the binding of tRNA to the ribosomes. The sequence is that of Small ribosomal subunit protein uS10 from Mesomycoplasma hyopneumoniae (strain 232) (Mycoplasma hyopneumoniae).